The chain runs to 103 residues: Small ribosomal subunit protein uS10 (103 aa).

The protein belongs to the universal ribosomal protein uS10 family. Part of the 30S ribosomal subunit.

Involved in the binding of tRNA to the ribosomes. In Dechloromonas aromatica (strain RCB), this protein is Small ribosomal subunit protein uS10.